The chain runs to 30 residues: Cycloviolacin-H4 (30 aa).

The cyclopeptide (Gly-Asn) cross-link spans G1 to N30. Intrachain disulfides connect C4–C21, C8–C23, and C13–C28.

This is a cyclic peptide.

Probably participates in a plant defense mechanism. Has potent hemolytic activity. The sequence is that of Cycloviolacin-H4 from Viola hederacea (Australian violet).